A 326-amino-acid chain; its full sequence is Phospho-N-acetylmuramoyl-pentapeptide-transferase (326 aa).

9 helical membrane-spanning segments follow: residues 3-23 (ISISAGIVTFLLTLVEIPAFI), 51-71 (TMGGLVFLITSVLVAFFFALF), 79-99 (VGMILFILVLYGLVGFLDDFL), 115-135 (LALQLLGGVIFYLFYERGGDI), 138-158 (VFGYPVHLGFFYIFFALFWLV), 169-189 (GVDGLASISVVISLSAYGVIA), 195-215 (MDILLVILAMIGGLLGFFIFN), 221-243 (VFMGDVGSLALGGMLAAISMALH), and 306-326 (FFFWGVGLLASLLTLAILYLM).

The protein belongs to the glycosyltransferase 4 family. MraY subfamily. The cofactor is Mg(2+).

It is found in the cell membrane. It catalyses the reaction UDP-N-acetyl-alpha-D-muramoyl-L-alanyl-gamma-D-glutamyl-L-lysyl-D-alanyl-D-alanine + di-trans,octa-cis-undecaprenyl phosphate = Mur2Ac(oyl-L-Ala-gamma-D-Glu-L-Lys-D-Ala-D-Ala)-di-trans,octa-cis-undecaprenyl diphosphate + UMP. Its pathway is cell wall biogenesis; peptidoglycan biosynthesis. Its function is as follows. Catalyzes the initial step of the lipid cycle reactions in the biosynthesis of the cell wall peptidoglycan: transfers peptidoglycan precursor phospho-MurNAc-pentapeptide from UDP-MurNAc-pentapeptide onto the lipid carrier undecaprenyl phosphate, yielding undecaprenyl-pyrophosphoryl-MurNAc-pentapeptide, known as lipid I. The chain is Phospho-N-acetylmuramoyl-pentapeptide-transferase from Streptococcus pneumoniae (strain 70585).